The primary structure comprises 378 residues: tRNA-specific 2-thiouridylase MnmA (378 aa).

Residues 27–34 (AMSGGVDS) and leucine 53 each bind ATP. The active-site Nucleophile is cysteine 121. Cysteines 121 and 218 form a disulfide. Residue glycine 145 participates in ATP binding. The interaction with tRNA stretch occupies residues 168–170 (RDQ). Residue cysteine 218 is the Cysteine persulfide intermediate of the active site.

Belongs to the MnmA/TRMU family.

Its subcellular location is the cytoplasm. The catalysed reaction is S-sulfanyl-L-cysteinyl-[protein] + uridine(34) in tRNA + AH2 + ATP = 2-thiouridine(34) in tRNA + L-cysteinyl-[protein] + A + AMP + diphosphate + H(+). Its function is as follows. Catalyzes the 2-thiolation of uridine at the wobble position (U34) of tRNA, leading to the formation of s(2)U34. This is tRNA-specific 2-thiouridylase MnmA from Rhizorhabdus wittichii (strain DSM 6014 / CCUG 31198 / JCM 15750 / NBRC 105917 / EY 4224 / RW1) (Sphingomonas wittichii).